The following is a 319-amino-acid chain: Acetyl-coenzyme A carboxylase carboxyl transferase subunit alpha (319 aa).

In terms of domain architecture, CoA carboxyltransferase C-terminal spans 35–296 (NIDEEVHRLR…KAQLLADLAD (262 aa)).

Belongs to the AccA family. In terms of assembly, acetyl-CoA carboxylase is a heterohexamer composed of biotin carboxyl carrier protein (AccB), biotin carboxylase (AccC) and two subunits each of ACCase subunit alpha (AccA) and ACCase subunit beta (AccD).

It localises to the cytoplasm. The catalysed reaction is N(6)-carboxybiotinyl-L-lysyl-[protein] + acetyl-CoA = N(6)-biotinyl-L-lysyl-[protein] + malonyl-CoA. It participates in lipid metabolism; malonyl-CoA biosynthesis; malonyl-CoA from acetyl-CoA: step 1/1. Component of the acetyl coenzyme A carboxylase (ACC) complex. First, biotin carboxylase catalyzes the carboxylation of biotin on its carrier protein (BCCP) and then the CO(2) group is transferred by the carboxyltransferase to acetyl-CoA to form malonyl-CoA. This is Acetyl-coenzyme A carboxylase carboxyl transferase subunit alpha from Klebsiella pneumoniae subsp. pneumoniae (strain ATCC 700721 / MGH 78578).